The primary structure comprises 480 residues: Glucosylglycerol phosphorylase (480 aa).

Aspartate 190 (nucleophile) is an active-site residue. Tyrosine 194 provides a ligand contact to substrate. Glutamate 231 (proton donor) is an active-site residue. A substrate-binding site is contributed by glutamine 336.

It belongs to the glycosyl hydrolase 13 family. Sucrose phosphorylase subfamily.

The catalysed reaction is 2-O-(alpha-D-glucopyranosyl)glycerol + phosphate = alpha-D-glucose 1-phosphate + glycerol. In terms of biological role, catalyzes the reversible phosphorolysis of 2-O-alpha-D-glucosylglycerol with retention of the anomeric configuration, forming alpha-D-glucose 1-phosphate and glycerol. Has most likely a catabolic role, either regulating the intracellular levels of glucosylglycerol, which acts as a compatible solute, or degrading it when the environmental conditions change. Cannot catalyze the phosphorolysis of sucrose or glucosylglycerate. This Marinobacter adhaerens (strain DSM 23420 / HP15) protein is Glucosylglycerol phosphorylase.